The chain runs to 170 residues: Transmembrane protein 217B (170 aa).

The first 21 residues, 1–21, serve as a signal peptide directing secretion; that stretch reads MNVRMFSLMVGIFSVLNTTQF. Residues 22-58 lie on the Lumenal side of the membrane; sequence FIFDLNQKTHICYEAKFSIYVDSKSELVTWTLFHRAN. The helical transmembrane segment at 59–79 threads the bilayer; that stretch reads ISTGLSLTTIIIGCFLFYCIH. Residues 80 to 85 lie on the Cytoplasmic side of the membrane; the sequence is KNIYMG. Residues 86–106 form a helical membrane-spanning segment; sequence LLIYAMWIITYELINFSIVLL. Residues 107-120 are Lumenal-facing; it reads LNGIIKDHFKTLSY. A helical membrane pass occupies residues 121 to 141; it reads LHWIFQISHMLLHFFCLPFIV. The Cytoplasmic portion of the chain corresponds to 142–170; sequence KHAYNLYKESQTVGRKRRHRLCSTIAVNS.

It localises to the membrane. The chain is Transmembrane protein 217B from Homo sapiens (Human).